We begin with the raw amino-acid sequence, 307 residues long: Agmatinase (307 aa).

Mn(2+)-binding residues include H126, D149, H151, D153, D230, and D232.

Belongs to the arginase family. Agmatinase subfamily. It depends on Mn(2+) as a cofactor.

The catalysed reaction is agmatine + H2O = urea + putrescine. Its pathway is amine and polyamine biosynthesis; putrescine biosynthesis via agmatine pathway; putrescine from agmatine: step 1/1. Its function is as follows. Catalyzes the formation of putrescine from agmatine. In Sodalis glossinidius (strain morsitans), this protein is Agmatinase.